Here is a 583-residue protein sequence, read N- to C-terminus: Steryl-sulfatase (583 aa).

A signal peptide spans 1–21 (MPLRKMKIPFLLLFFLWEAES). Over 22-184 (HAASRPNIIL…GSVFTTGFKR (163 aa)) the chain is Lumenal. 2 residues coordinate Ca(2+): D35 and D36. A glycan (N-linked (GlcNAc...) asparagine) is linked at N47. C75 lines the Ca(2+) pocket. C75 (nucleophile) is an active-site residue. C75 carries the post-translational modification 3-oxoalanine (Cys). The active site involves H136. Cystine bridges form between C141/C148 and C170/C242. The chain crosses the membrane as a helical span at residues 185–208 (LVFLPLQIVGVTLLTLAALNCLGL). The Cytoplasmic portion of the chain corresponds to 209-212 (LHVP). A helical transmembrane segment spans residues 213 to 234 (LGVFFSLLFLAALILTLFLGFL). Residues 235–583 (HYFRPLNCFM…REKQDKRLSR (349 aa)) lie on the Lumenal side of the membrane. N-linked (GlcNAc...) asparagine glycosylation is present at N259. Ca(2+) is bound by residues D342 and Q343. Disulfide bonds link C446–C489, C481–C487, C562–C570, and C563–C572.

The protein belongs to the sulfatase family. Homodimer. Requires Ca(2+) as cofactor. The conversion to 3-oxoalanine (also known as C-formylglycine, FGly), of a serine or cysteine residue in prokaryotes and of a cysteine residue in eukaryotes, is critical for catalytic activity.

It localises to the cytoplasmic vesicle. The protein resides in the secretory vesicle. The protein localises to the microneme membrane. Its subcellular location is the endoplasmic reticulum membrane. The catalysed reaction is dehydroepiandrosterone 3-sulfate + H2O = 3beta-hydroxyandrost-5-en-17-one + sulfate + H(+). It catalyses the reaction estrone 3-sulfate + H2O = estrone + sulfate + H(+). In terms of biological role, catalyzes the conversion of sulfated steroid precursors, such as dehydroepiandrosterone sulfate (DHEA-S) and estrone sulfate to the free steroid. This is Steryl-sulfatase (STS) from Homo sapiens (Human).